The primary structure comprises 1073 residues: Semaphorin-6D (1073 aa).

The signal sequence occupies residues 1-20 (MRVFLLCAYILLLMVSQLRA). The Extracellular portion of the chain corresponds to 21–662 (VSFPEDDEPL…GESNQMVHMN (642 aa)). One can recognise a Sema domain in the interval 27 to 512 (DEPLNTVDYH…FSSCIIRIPL (486 aa)). Asn-51 carries an N-linked (GlcNAc...) asparagine glycan. 4 disulfides stabilise this stretch: Cys-108–Cys-118, Cys-136–Cys-145, Cys-259–Cys-370, and Cys-284–Cys-329. An N-linked (GlcNAc...) asparagine glycan is attached at Asn-283. 2 N-linked (GlcNAc...) asparagine glycosylation sites follow: Asn-435 and Asn-461. Disulfide bonds link Cys-477–Cys-506, Cys-515–Cys-533, Cys-521–Cys-568, and Cys-525–Cys-541. Residues 514–569 (RCERYGSCKKSCIASRDPYCGWLSQGSCGRVTPGMLAEGYEQDTEFGNTAHLGDCH) enclose the PSI domain. Asn-631 is a glycosylation site (N-linked (GlcNAc...) asparagine). The chain crosses the membrane as a helical span at residues 663–683 (VLITCVFAAFVLGAFIAGVAV). Over 684–1073 (YCYRDMFVRK…SVRPLNKYTY (390 aa)) the chain is Cytoplasmic. Residues Ser-723, Ser-734, and Ser-744 each carry the phosphoserine modification. 5 disordered regions span residues 744-775 (SRKE…PTPE), 787-825 (AMKS…GHIP), 839-874 (TSFS…RSVD), 914-1005 (SMSE…PTPT), and 1021-1073 (LQPS…KYTY). Position 773 is a phosphothreonine (Thr-773). The segment covering 790 to 805 (SHSEKAHGHGASRKET) has biased composition (basic and acidic residues). A phosphoserine mark is found at Ser-931, Ser-957, and Ser-983. Positions 931-942 (SPPSTLPRNSPT) are enriched in polar residues. Polar residues-rich tracts occupy residues 980-995 (NLNS…QPSM) and 1021-1037 (LQPS…NGTL).

Belongs to the semaphorin family.

It localises to the cell membrane. Its subcellular location is the cytoplasm. Shows growth cone collapsing activity on dorsal root ganglion (DRG) neurons in vitro. May be a stop signal for the DRG neurons in their target areas, and possibly also for other neurons. May also be involved in the maintenance and remodeling of neuronal connections. Ligand of TREM2 with PLXNA1 as coreceptor in dendritic cells, plays a role in the generation of immune responses and skeletal homeostasis. The polypeptide is Semaphorin-6D (Homo sapiens (Human)).